The sequence spans 672 residues: Zinc finger and BTB domain-containing protein 24 (672 aa).

Residues 39–105 enclose the BTB domain; the sequence is CDITLIVEDV…MYSAVVLVDE (67 aa). The segment at 136-208 is disordered; sequence HMQVKRKRGR…GKRKIKQPIR (73 aa). Positions 140–152 form a DNA-binding region, a.T hook 1; that stretch reads KRKRGRPKKNQDL. Residues 148–158 show a composition bias toward basic and acidic residues; sequence KNQDLSQKENP. The segment covering 160 to 171 has biased composition (polar residues); that stretch reads SELQAQTSSEIQ. Over residues 198–208 the composition is skewed to basic residues; it reads EGKRKIKQPIR. Residues 223-235 constitute a DNA-binding region (a.T hook 2); it reads PGKRGRRRKYPDT. 8 consecutive C2H2-type zinc fingers follow at residues 237–259, 265–287, 293–315, 321–343, 349–371, 377–399, 405–427, and 433–455; these read ARCE…QRTH, FRCS…QRMH, YICT…MNLH, FTCE…NRVH, PECA…LRTH, FTCE…IRIH, YVCK…EVSH, and FSCS…IKTH. The disordered stretch occupies residues 453–492; that stretch reads KTHNKENPPAQAESTDKPPQSAPEQQEQEQQQQQQTSGDK. The segment covering 476–487 has biased composition (low complexity); the sequence is EQQEQEQQQQQQ.

This sequence belongs to the krueppel C2H2-type zinc-finger protein family.

Its subcellular location is the nucleus. In terms of biological role, may be involved in BMP2-induced transcription. This Danio rerio (Zebrafish) protein is Zinc finger and BTB domain-containing protein 24 (zbtb24).